A 162-amino-acid chain; its full sequence is SsrA-binding protein (162 aa).

Belongs to the SmpB family.

Its subcellular location is the cytoplasm. In terms of biological role, required for rescue of stalled ribosomes mediated by trans-translation. Binds to transfer-messenger RNA (tmRNA), required for stable association of tmRNA with ribosomes. tmRNA and SmpB together mimic tRNA shape, replacing the anticodon stem-loop with SmpB. tmRNA is encoded by the ssrA gene; the 2 termini fold to resemble tRNA(Ala) and it encodes a 'tag peptide', a short internal open reading frame. During trans-translation Ala-aminoacylated tmRNA acts like a tRNA, entering the A-site of stalled ribosomes, displacing the stalled mRNA. The ribosome then switches to translate the ORF on the tmRNA; the nascent peptide is terminated with the 'tag peptide' encoded by the tmRNA and targeted for degradation. The ribosome is freed to recommence translation, which seems to be the essential function of trans-translation. This Granulibacter bethesdensis (strain ATCC BAA-1260 / CGDNIH1) protein is SsrA-binding protein.